A 356-amino-acid chain; its full sequence is Phospho-N-acetylmuramoyl-pentapeptide-transferase (356 aa).

10 consecutive transmembrane segments (helical) span residues 27–47, 73–93, 97–117, 138–158, 165–185, 195–215, 232–252, 258–278, 284–304, and 333–353; these read ATLM…INML, TMGG…WMDL, FVWA…LDDL, FLVA…WLYV, AIPL…GAGN, GLAI…AYLA, AGEL…FLWF, AVFM…AIAV, IVLA…IIQV, and KVVI…LATL.

Belongs to the glycosyltransferase 4 family. MraY subfamily. Requires Mg(2+) as cofactor.

It localises to the cell inner membrane. It catalyses the reaction UDP-N-acetyl-alpha-D-muramoyl-L-alanyl-gamma-D-glutamyl-meso-2,6-diaminopimeloyl-D-alanyl-D-alanine + di-trans,octa-cis-undecaprenyl phosphate = di-trans,octa-cis-undecaprenyl diphospho-N-acetyl-alpha-D-muramoyl-L-alanyl-D-glutamyl-meso-2,6-diaminopimeloyl-D-alanyl-D-alanine + UMP. It functions in the pathway cell wall biogenesis; peptidoglycan biosynthesis. Catalyzes the initial step of the lipid cycle reactions in the biosynthesis of the cell wall peptidoglycan: transfers peptidoglycan precursor phospho-MurNAc-pentapeptide from UDP-MurNAc-pentapeptide onto the lipid carrier undecaprenyl phosphate, yielding undecaprenyl-pyrophosphoryl-MurNAc-pentapeptide, known as lipid I. The chain is Phospho-N-acetylmuramoyl-pentapeptide-transferase from Erythrobacter litoralis (strain HTCC2594).